Reading from the N-terminus, the 663-residue chain is Cyclic nucleotide-gated channel alpha-2 (663 aa).

Positions 1–61 (MTEKANGVKS…QLAEMDAPQQ (61 aa)) are disordered. The Cytoplasmic portion of the chain corresponds to 1–144 (MTEKANGVKS…PAGDWYYRWL (144 aa)). The span at 12-23 (PANNHNHHAPPA) shows a compositional bias: low complexity. The chain crosses the membrane as a helical span at residues 145–166 (FLIALPVLYNWCLLVARACFSD). Residues 167 to 176 (LQKGYYIVWL) lie on the Extracellular side of the membrane. The chain crosses the membrane as a helical span at residues 177-197 (VLDYVSDVVYIADLFIRLRTG). The Cytoplasmic portion of the chain corresponds to 198–222 (FLEQGLLVKDTKKLRDNYIHTMQFK). The helical transmembrane segment at 223 to 241 (LDVASIIPTDLIYFAVGIH) threads the bilayer. Residues 242–246 (NPEVR) lie on the Extracellular side of the membrane. The helical transmembrane segment at 247–265 (FNRLLHFARMFEFFDRTET) threads the bilayer. Over 266–272 (RTSYPNI) the chain is Cytoplasmic. The ion conduction pathway stretch occupies residues 270 to 378 (PNIFRISNLI…GNVGSMISNM (109 aa)). Residues 273 to 296 (FRISNLILYILIIIHWNACIYYAI) form a helical membrane-spanning segment. The Extracellular segment spans residues 297–319 (SKSIGFGVDTWVYPNITDPEYGY). Transmembrane regions (helical) follow at residues 320 to 354 (LSREYIYCLYWSTLTLTTIGETPPPVKDEEYLFVI) and 355 to 379 (FDFLIGVLIFATIVGNVGSMISNMN). A selectivity filter region spans residues 337–340 (TIGE). Residues 380–456 (ATRAEFQAKI…STLKKVRIFQ (77 aa)) form a C-linker region. Residues 380 to 663 (ATRAEFQAKI…NSPEPPAEKP (284 aa)) lie on the Cytoplasmic side of the membrane. A cyclic nucleotide-binding domain region spans residues 460–580 (AGLLVELVLK…EERGREILMK (121 aa)). 3',5'-cyclic GMP is bound by residues Gly-520, Ser-523, Arg-536, and Thr-537. Positions 536 and 537 each coordinate 3',5'-cyclic AMP. Residues 597-651 (VQEKLEQLETNMDTLYTRFARLLAEYTGAQQKLKQRITVLETKMKQNNEDDSLSD) adopt a coiled-coil conformation. Positions 640–663 (MKQNNEDDSLSDGMNSPEPPAEKP) are disordered.

The protein belongs to the cyclic nucleotide-gated cation channel (TC 1.A.1.5) family. CNGA2 subfamily. The olfactory cyclic nucleotide-gated channel is an heterotetramer composed of CNGA2, CNGA4 and CNGB1b subunits with 2:1:1 stoichiometry. Olfactory neurons.

The protein localises to the cell projection. The protein resides in the cilium membrane. It carries out the reaction Ca(2+)(in) = Ca(2+)(out). The enzyme catalyses Na(+)(in) = Na(+)(out). The catalysed reaction is K(+)(in) = K(+)(out). It catalyses the reaction NH4(+)(in) = NH4(+)(out). It carries out the reaction Rb(+)(in) = Rb(+)(out). The enzyme catalyses Li(+)(in) = Li(+)(out). The catalysed reaction is Cs(+)(in) = Cs(+)(out). In terms of biological role, pore-forming subunit of the olfactory cyclic nucleotide-gated channel. Operates in the cilia of olfactory sensory neurons where chemical stimulation of the odorant is converted to an electrical signal. Mediates odorant-induced cAMP-dependent Ca(2+) influx triggering neuron depolarization. The rise of intracellular Ca(2+) levels potentiates the olfactory response by activating Ca(2+)-dependent Cl(-) channels, but it also serves as a negative feedback signal to desensitize the channel for rapid adaptation to odorants. Conducts cAMP- and cGMP-gated ion currents, with permeability for monovalent and divalent cations. The polypeptide is Cyclic nucleotide-gated channel alpha-2 (Bos taurus (Bovine)).